Reading from the N-terminus, the 125-residue chain is Large ribosomal subunit protein eL8 (125 aa).

Belongs to the eukaryotic ribosomal protein eL8 family. In terms of assembly, part of the 50S ribosomal subunit. Probably part of the RNase P complex.

The protein localises to the cytoplasm. In terms of biological role, multifunctional RNA-binding protein that recognizes the K-turn motif in ribosomal RNA, the RNA component of RNase P, box H/ACA, box C/D and box C'/D' sRNAs. This is Large ribosomal subunit protein eL8 from Metallosphaera sedula (strain ATCC 51363 / DSM 5348 / JCM 9185 / NBRC 15509 / TH2).